The sequence spans 150 residues: Large ribosomal subunit protein bL9 (150 aa).

Belongs to the bacterial ribosomal protein bL9 family.

Its function is as follows. Binds to the 23S rRNA. The protein is Large ribosomal subunit protein bL9 of Streptococcus pyogenes serotype M18 (strain MGAS8232).